Reading from the N-terminus, the 58-residue chain is Small ribosomal subunit protein bS21 (58 aa).

The protein belongs to the bacterial ribosomal protein bS21 family.

In Staphylococcus aureus (strain bovine RF122 / ET3-1), this protein is Small ribosomal subunit protein bS21.